Here is a 96-residue protein sequence, read N- to C-terminus: Glutamyl-tRNA(Gln) amidotransferase subunit C (96 aa).

It belongs to the GatC family. As to quaternary structure, heterotrimer of A, B and C subunits.

The enzyme catalyses L-glutamyl-tRNA(Gln) + L-glutamine + ATP + H2O = L-glutaminyl-tRNA(Gln) + L-glutamate + ADP + phosphate + H(+). The catalysed reaction is L-aspartyl-tRNA(Asn) + L-glutamine + ATP + H2O = L-asparaginyl-tRNA(Asn) + L-glutamate + ADP + phosphate + 2 H(+). Allows the formation of correctly charged Asn-tRNA(Asn) or Gln-tRNA(Gln) through the transamidation of misacylated Asp-tRNA(Asn) or Glu-tRNA(Gln) in organisms which lack either or both of asparaginyl-tRNA or glutaminyl-tRNA synthetases. The reaction takes place in the presence of glutamine and ATP through an activated phospho-Asp-tRNA(Asn) or phospho-Glu-tRNA(Gln). The chain is Glutamyl-tRNA(Gln) amidotransferase subunit C from Nostoc sp. (strain PCC 7120 / SAG 25.82 / UTEX 2576).